A 225-amino-acid polypeptide reads, in one-letter code: UPF0758 protein Ssed_0385 (225 aa).

The region spanning 102–224 (ILSDPDLTRD…IVSFAERGWI (123 aa)) is the MPN domain. Zn(2+) contacts are provided by His-173, His-175, and Asp-186. The JAMM motif motif lies at 173 to 186 (HNHPSGVAEPSLAD).

It belongs to the UPF0758 family.

The chain is UPF0758 protein Ssed_0385 from Shewanella sediminis (strain HAW-EB3).